A 300-amino-acid polypeptide reads, in one-letter code: Protein phosphatase 2C 1 (300 aa).

Residues 23–298 (IFAASEMQGW…DNMTTILVYL (276 aa)) form the PPM-type phosphatase domain. The Mn(2+) site is built by Asp-57, Gly-58, Asp-237, and Asp-289.

Belongs to the PP2C family. Mg(2+) is required as a cofactor. Requires Mn(2+) as cofactor. The N-terminus is blocked.

Its subcellular location is the membrane. The enzyme catalyses O-phospho-L-seryl-[protein] + H2O = L-seryl-[protein] + phosphate. It carries out the reaction O-phospho-L-threonyl-[protein] + H2O = L-threonyl-[protein] + phosphate. Serine and threonine phosphatase. In Paramecium tetraurelia, this protein is Protein phosphatase 2C 1.